Consider the following 363-residue polypeptide: MSKLKDPMDDSLKNKLNKEKAIELARVQIEKDFGKGSLIKMGESPVGKYLESIPSGSILLDEAIGIGGYPRGRVVEIFGPESSGKTTLTLQAIAEIQKTGGIAAFIDAEHALDPVYARALGVNINELWLSQPDTGEQALDIAEYLIRSGGVDLIVVDSVAALTPQAEIDGEMGDTQIGLQARLMSKALRKITAILSKSNTCIMFINQIRMKIGLVFGSPETTTGGNALKFYSSLRLEVRKVEQVIGSSSDNVIGNKIRVKVVKNKVAPPFRKAELIVYFGKGISREASILDAAIKYNLVQKSGSWYAMGDDNLGQGRENVIEYLFKEKALANELENKLRKIIFESPSQDSLTVDISKSEENKE.

Residue 79 to 86 (GPESSGKT) participates in ATP binding.

The protein belongs to the RecA family.

It localises to the cytoplasm. Its function is as follows. Can catalyze the hydrolysis of ATP in the presence of single-stranded DNA, the ATP-dependent uptake of single-stranded DNA by duplex DNA, and the ATP-dependent hybridization of homologous single-stranded DNAs. It interacts with LexA causing its activation and leading to its autocatalytic cleavage. The chain is Protein RecA from Borrelia duttonii (strain Ly).